A 146-amino-acid polypeptide reads, in one-letter code: uncharacterized protein (146 aa).

The region spanning 1 to 137 (MLSQEFFNSF…TINVMNQIHE (137 aa)) is the HTH marR-type domain.

This is an uncharacterized protein from Staphylococcus aureus (strain N315).